A 418-amino-acid chain; its full sequence is Actin-like protein C08B11.6 (418 aa).

This sequence belongs to the actin family. ARP6 subfamily.

Its subcellular location is the cytoplasm. It localises to the cytoskeleton. This Caenorhabditis elegans protein is Actin-like protein C08B11.6 (arp-6).